The primary structure comprises 397 residues: Acetate kinase (397 aa).

Asn-7 is a Mg(2+) binding site. Residue Lys-14 participates in ATP binding. Substrate is bound at residue Arg-90. The active-site Proton donor/acceptor is Asp-147. Residues His-207–Gly-211, Asp-282–Arg-284, and Gly-330–Asn-334 contribute to the ATP site. Glu-383 provides a ligand contact to Mg(2+).

The protein belongs to the acetokinase family. In terms of assembly, homodimer. It depends on Mg(2+) as a cofactor. Mn(2+) serves as cofactor.

It is found in the cytoplasm. It carries out the reaction acetate + ATP = acetyl phosphate + ADP. The protein operates within metabolic intermediate biosynthesis; acetyl-CoA biosynthesis; acetyl-CoA from acetate: step 1/2. Functionally, catalyzes the formation of acetyl phosphate from acetate and ATP. Can also catalyze the reverse reaction. This chain is Acetate kinase, found in Clostridium botulinum (strain Langeland / NCTC 10281 / Type F).